The sequence spans 238 residues: ATP-dependent dethiobiotin synthetase BioD (238 aa).

12–17 (EVGKTV) lines the ATP pocket. T16 contributes to the Mg(2+) binding site. Residue K37 is part of the active site. T41 contacts substrate. Residues D50, 109-112 (EGAG), 170-171 (GS), and 200-202 (PAG) each bind ATP. Mg(2+) is bound by residues D50 and E109.

It belongs to the dethiobiotin synthetase family. As to quaternary structure, homodimer. Requires Mg(2+) as cofactor.

Its subcellular location is the cytoplasm. The catalysed reaction is (7R,8S)-7,8-diammoniononanoate + CO2 + ATP = (4R,5S)-dethiobiotin + ADP + phosphate + 3 H(+). The protein operates within cofactor biosynthesis; biotin biosynthesis; biotin from 7,8-diaminononanoate: step 1/2. Catalyzes a mechanistically unusual reaction, the ATP-dependent insertion of CO2 between the N7 and N8 nitrogen atoms of 7,8-diaminopelargonic acid (DAPA, also called 7,8-diammoniononanoate) to form a ureido ring. The protein is ATP-dependent dethiobiotin synthetase BioD of Parafrankia sp. (strain EAN1pec).